We begin with the raw amino-acid sequence, 475 residues long: Ribulose bisphosphate carboxylase large chain (475 aa).

The propeptide occupies 1-2 (MS). Pro3 is subject to N-acetylproline. Residue Lys14 is modified to N6,N6,N6-trimethyllysine. 2 residues coordinate substrate: Asn123 and Thr173. Lys175 functions as the Proton acceptor in the catalytic mechanism. Substrate is bound at residue Lys177. The Mg(2+) site is built by Lys201, Asp203, and Glu204. The residue at position 201 (Lys201) is an N6-carboxylysine. His294 (proton acceptor) is an active-site residue. Residues Arg295, His327, and Ser379 each coordinate substrate.

This sequence belongs to the RuBisCO large chain family. Type I subfamily. Heterohexadecamer of 8 large chains and 8 small chains; disulfide-linked. The disulfide link is formed within the large subunit homodimers. Mg(2+) is required as a cofactor. In terms of processing, the disulfide bond which can form in the large chain dimeric partners within the hexadecamer appears to be associated with oxidative stress and protein turnover.

It is found in the plastid. The protein localises to the chloroplast. The enzyme catalyses 2 (2R)-3-phosphoglycerate + 2 H(+) = D-ribulose 1,5-bisphosphate + CO2 + H2O. It catalyses the reaction D-ribulose 1,5-bisphosphate + O2 = 2-phosphoglycolate + (2R)-3-phosphoglycerate + 2 H(+). Functionally, ruBisCO catalyzes two reactions: the carboxylation of D-ribulose 1,5-bisphosphate, the primary event in carbon dioxide fixation, as well as the oxidative fragmentation of the pentose substrate in the photorespiration process. Both reactions occur simultaneously and in competition at the same active site. In Nandina domestica (Heavenly bamboo), this protein is Ribulose bisphosphate carboxylase large chain.